A 128-amino-acid polypeptide reads, in one-letter code: NADPH-dependent 7-cyano-7-deazaguanine reductase (128 aa).

Cys-34 acts as the Thioimide intermediate in catalysis. Catalysis depends on Asp-41, which acts as the Proton donor. Substrate-binding positions include 56-58 (VEL) and 75-76 (HE).

This sequence belongs to the GTP cyclohydrolase I family. QueF type 1 subfamily.

Its subcellular location is the cytoplasm. The enzyme catalyses 7-aminomethyl-7-carbaguanine + 2 NADP(+) = 7-cyano-7-deazaguanine + 2 NADPH + 3 H(+). The protein operates within tRNA modification; tRNA-queuosine biosynthesis. In terms of biological role, catalyzes the NADPH-dependent reduction of 7-cyano-7-deazaguanine (preQ0) to 7-aminomethyl-7-deazaguanine (preQ1). The chain is NADPH-dependent 7-cyano-7-deazaguanine reductase from Thermomicrobium roseum (strain ATCC 27502 / DSM 5159 / P-2).